The chain runs to 227 residues: Cytidylate kinase (227 aa).

Residue 12 to 20 (GPSGAGKGT) coordinates ATP.

The protein belongs to the cytidylate kinase family. Type 1 subfamily.

Its subcellular location is the cytoplasm. The catalysed reaction is CMP + ATP = CDP + ADP. The enzyme catalyses dCMP + ATP = dCDP + ADP. The polypeptide is Cytidylate kinase (Salmonella paratyphi A (strain ATCC 9150 / SARB42)).